We begin with the raw amino-acid sequence, 198 residues long: MLYPTPIAKLIDSYSKLPGIGIKTATRLAFYTIGMSDEDVNDFAKNLLAAKRELTYCSVCGNLTDEDPCSICTDPSRDKSMILVVEDSKDVSAMEKIQEYHGYYHVLHGLISPMNGVGPDDINLKTLITRLMDSDVSEVIVATNATADGEATSMYISRVLKPAGIKVTRLARGLAVGSDIEYADEVTLLRAIENRTEL.

Residues 57–72 form a C4-type zinc finger; that stretch reads CSVCGNLTDEDPCSIC. One can recognise a Toprim domain in the interval 80-175; it reads SMILVVEDSK…KVTRLARGLA (96 aa).

Belongs to the RecR family.

In terms of biological role, may play a role in DNA repair. It seems to be involved in an RecBC-independent recombinational process of DNA repair. It may act with RecF and RecO. The sequence is that of Recombination protein RecR from Streptococcus uberis (strain ATCC BAA-854 / 0140J).